The following is a 158-amino-acid chain: 2-C-methyl-D-erythritol 2,4-cyclodiphosphate synthase (158 aa).

Residues Asp-8 and His-10 each contribute to the a divalent metal cation site. Residues 8-10 (DVH) and 34-35 (HS) contribute to the 4-CDP-2-C-methyl-D-erythritol 2-phosphate site. An a divalent metal cation-binding site is contributed by His-42. 4-CDP-2-C-methyl-D-erythritol 2-phosphate is bound by residues 56-58 (DIG), 61-65 (FPDDD), 132-135 (TTFE), and Phe-139.

Belongs to the IspF family. In terms of assembly, homotrimer. It depends on a divalent metal cation as a cofactor.

It catalyses the reaction 4-CDP-2-C-methyl-D-erythritol 2-phosphate = 2-C-methyl-D-erythritol 2,4-cyclic diphosphate + CMP. It participates in isoprenoid biosynthesis; isopentenyl diphosphate biosynthesis via DXP pathway; isopentenyl diphosphate from 1-deoxy-D-xylulose 5-phosphate: step 4/6. In terms of biological role, involved in the biosynthesis of isopentenyl diphosphate (IPP) and dimethylallyl diphosphate (DMAPP), two major building blocks of isoprenoid compounds. Catalyzes the conversion of 4-diphosphocytidyl-2-C-methyl-D-erythritol 2-phosphate (CDP-ME2P) to 2-C-methyl-D-erythritol 2,4-cyclodiphosphate (ME-CPP) with a corresponding release of cytidine 5-monophosphate (CMP). In Natranaerobius thermophilus (strain ATCC BAA-1301 / DSM 18059 / JW/NM-WN-LF), this protein is 2-C-methyl-D-erythritol 2,4-cyclodiphosphate synthase.